Consider the following 369-residue polypeptide: Isopentenyl-diphosphate delta-isomerase (369 aa).

9–10 contacts substrate; that stretch reads RK. FMN is bound by residues Thr-65, 66–68, Ser-96, and Asn-125; that span reads GMT. 96-98 is a substrate binding site; that stretch reads SQR. Gln-160 provides a ligand contact to substrate. A Mg(2+)-binding site is contributed by Glu-161. FMN contacts are provided by residues Lys-193, Ser-218, Thr-223, 275–277, and 296–297; these read GVR and AL.

It belongs to the IPP isomerase type 2 family. In terms of assembly, homooctamer. Dimer of tetramers. Requires FMN as cofactor. It depends on NADPH as a cofactor. Mg(2+) is required as a cofactor.

It localises to the cytoplasm. The enzyme catalyses isopentenyl diphosphate = dimethylallyl diphosphate. Involved in the biosynthesis of isoprenoids. Catalyzes the 1,3-allylic rearrangement of the homoallylic substrate isopentenyl (IPP) to its allylic isomer, dimethylallyl diphosphate (DMAPP). The protein is Isopentenyl-diphosphate delta-isomerase of Sulfurisphaera tokodaii (strain DSM 16993 / JCM 10545 / NBRC 100140 / 7) (Sulfolobus tokodaii).